Consider the following 1141-residue polypeptide: Membrane-associated protein gex-3 (1141 aa).

Belongs to the HEM-1/HEM-2 family. As to quaternary structure, interacts with aco-1, gei-13 and gex-2. Interacts with gex-3. In terms of tissue distribution, expressed in neurons.

The protein resides in the cytoplasm. Functionally, rac effector required for tissue morphogenesis, cell migrations and egg laying. May play a role in egg laying and in yolk protein clatherin-mediated endocytosis by oocytes during oogenesis. Plays a role in the formation of gap junctions between EA and EP endodermal precursor cells in embryos. This Caenorhabditis elegans protein is Membrane-associated protein gex-3.